Consider the following 447-residue polypeptide: N-succinylarginine dihydrolase (447 aa).

Residues Ala-19 to Ser-28, Asn-110, and His-137 to Arg-138 each bind substrate. Glu-174 is a catalytic residue. Residue Arg-212 coordinates substrate. His-248 is a catalytic residue. Asp-250 and Asn-359 together coordinate substrate. Residue Cys-365 is the Nucleophile of the active site.

Belongs to the succinylarginine dihydrolase family. In terms of assembly, homodimer.

It catalyses the reaction N(2)-succinyl-L-arginine + 2 H2O + 2 H(+) = N(2)-succinyl-L-ornithine + 2 NH4(+) + CO2. The protein operates within amino-acid degradation; L-arginine degradation via AST pathway; L-glutamate and succinate from L-arginine: step 2/5. Catalyzes the hydrolysis of N(2)-succinylarginine into N(2)-succinylornithine, ammonia and CO(2). The polypeptide is N-succinylarginine dihydrolase (Salmonella paratyphi B (strain ATCC BAA-1250 / SPB7)).